A 348-amino-acid chain; its full sequence is Flap endonuclease 1 (348 aa).

An N-domain region spans residues 1–98; the sequence is MGLAELRELI…ETLERRRERK (98 aa). Mg(2+)-binding residues include aspartate 28, aspartate 80, glutamate 149, glutamate 151, aspartate 170, aspartate 172, and aspartate 234. Residues 113-256 are I-domain; it reads EREKYARQVA…RALQLIRKYG (144 aa). An interaction with PCNA region spans residues 340–348; sequence RQETLDAFF.

It belongs to the XPG/RAD2 endonuclease family. FEN1 subfamily. Interacts with PCNA. PCNA stimulates the nuclease activity without altering cleavage specificity. The cofactor is Mg(2+).

Structure-specific nuclease with 5'-flap endonuclease and 5'-3' exonuclease activities involved in DNA replication and repair. During DNA replication, cleaves the 5'-overhanging flap structure that is generated by displacement synthesis when DNA polymerase encounters the 5'-end of a downstream Okazaki fragment. Binds the unpaired 3'-DNA end and kinks the DNA to facilitate 5' cleavage specificity. Cleaves one nucleotide into the double-stranded DNA from the junction in flap DNA, leaving a nick for ligation. Also involved in the base excision repair (BER) pathway. Acts as a genome stabilization factor that prevents flaps from equilibrating into structures that lead to duplications and deletions. Also possesses 5'-3' exonuclease activity on nicked or gapped double-stranded DNA. The protein is Flap endonuclease 1 of Methanopyrus kandleri (strain AV19 / DSM 6324 / JCM 9639 / NBRC 100938).